Reading from the N-terminus, the 182-residue chain is Small ribosomal subunit protein uS4c (182 aa).

The 62-residue stretch at 82 to 143 folds into the S4 RNA-binding domain; it reads MRLDNILFRL…KERSKVLIQN (62 aa).

Belongs to the universal ribosomal protein uS4 family. Part of the 30S ribosomal subunit. Contacts protein S5. The interaction surface between S4 and S5 is involved in control of translational fidelity.

The protein localises to the plastid. Its subcellular location is the chloroplast. In terms of biological role, one of the primary rRNA binding proteins, it binds directly to 16S rRNA where it nucleates assembly of the body of the 30S subunit. With S5 and S12 plays an important role in translational accuracy. This is Small ribosomal subunit protein uS4c (rps4) from Neomarica sp. (strain Lejeune 1997).